The chain runs to 458 residues: tRNA-2-methylthio-N(6)-dimethylallyladenosine synthase (458 aa).

The 120-residue stretch at 15 to 134 (KKVFIKTYGC…LPDLLEQTKQ (120 aa)) folds into the MTTase N-terminal domain. Residues C24, C60, C97, C175, C179, and C182 each coordinate [4Fe-4S] cluster. The 233-residue stretch at 161-393 (RKRGVSAFLT…QVLLLEQQNA (233 aa)) folds into the Radical SAM core domain. A TRAM domain is found at 396–457 (RSKIGQTTDV…SNSFVGEMTN (62 aa)).

The protein belongs to the methylthiotransferase family. MiaB subfamily. In terms of assembly, monomer. [4Fe-4S] cluster is required as a cofactor.

Its subcellular location is the cytoplasm. It carries out the reaction N(6)-dimethylallyladenosine(37) in tRNA + (sulfur carrier)-SH + AH2 + 2 S-adenosyl-L-methionine = 2-methylsulfanyl-N(6)-dimethylallyladenosine(37) in tRNA + (sulfur carrier)-H + 5'-deoxyadenosine + L-methionine + A + S-adenosyl-L-homocysteine + 2 H(+). In terms of biological role, catalyzes the methylthiolation of N6-(dimethylallyl)adenosine (i(6)A), leading to the formation of 2-methylthio-N6-(dimethylallyl)adenosine (ms(2)i(6)A) at position 37 in tRNAs that read codons beginning with uridine. In Bartonella henselae (strain ATCC 49882 / DSM 28221 / CCUG 30454 / Houston 1) (Rochalimaea henselae), this protein is tRNA-2-methylthio-N(6)-dimethylallyladenosine synthase.